The chain runs to 343 residues: Dual-specificity RNA methyltransferase RlmN (343 aa).

Glutamate 92 (proton acceptor) is an active-site residue. Residues 98 to 325 enclose the Radical SAM core domain; it reads DEDRTTLCIS…VITRSSRGSD (228 aa). A disulfide bridge connects residues cysteine 105 and cysteine 330. Residues cysteine 112, cysteine 116, and cysteine 119 each contribute to the [4Fe-4S] cluster site. S-adenosyl-L-methionine contacts are provided by residues 157–158, serine 189, 211–213, and asparagine 287; these read GE and SLN. Catalysis depends on cysteine 330, which acts as the S-methylcysteine intermediate.

It belongs to the radical SAM superfamily. RlmN family. [4Fe-4S] cluster is required as a cofactor.

It is found in the cytoplasm. The catalysed reaction is adenosine(2503) in 23S rRNA + 2 reduced [2Fe-2S]-[ferredoxin] + 2 S-adenosyl-L-methionine = 2-methyladenosine(2503) in 23S rRNA + 5'-deoxyadenosine + L-methionine + 2 oxidized [2Fe-2S]-[ferredoxin] + S-adenosyl-L-homocysteine. The enzyme catalyses adenosine(37) in tRNA + 2 reduced [2Fe-2S]-[ferredoxin] + 2 S-adenosyl-L-methionine = 2-methyladenosine(37) in tRNA + 5'-deoxyadenosine + L-methionine + 2 oxidized [2Fe-2S]-[ferredoxin] + S-adenosyl-L-homocysteine. In terms of biological role, specifically methylates position 2 of adenine 2503 in 23S rRNA and position 2 of adenine 37 in tRNAs. m2A2503 modification seems to play a crucial role in the proofreading step occurring at the peptidyl transferase center and thus would serve to optimize ribosomal fidelity. This chain is Dual-specificity RNA methyltransferase RlmN, found in Geotalea uraniireducens (strain Rf4) (Geobacter uraniireducens).